The following is a 161-amino-acid chain: Putative pre-16S rRNA nuclease (161 aa).

This sequence belongs to the YqgF nuclease family.

The protein localises to the cytoplasm. Functionally, could be a nuclease involved in processing of the 5'-end of pre-16S rRNA. The protein is Putative pre-16S rRNA nuclease of Bartonella bacilliformis (strain ATCC 35685 / KC583 / Herrer 020/F12,63).